The chain runs to 1012 residues: Centriole and centriolar satellite protein OFD1 (1012 aa).

Residues 70 to 102 (LIGASNSLVADHLQRCGYEYSLSVFFPESGLAK) form the LisH domain. 2 coiled-coil regions span residues 189-557 (QRIK…ENEV) and 622-662 (DSDL…NSAK). The segment at 609–665 (TNYPTAWVEGSSPDSDLEFVANTKARVKELQQEAERLEKAFRSYHRRVIKNSAKSPL) is mediates homooligomerization. The mediates the interaction with SDCCAG8 stretch occupies residues 615–1012 (WVEGSSPDSD…FSHEELDDSW (398 aa)). 4 positions are modified to phosphoserine: serine 663, serine 669, serine 686, and serine 720. The disordered stretch occupies residues 719-744 (GSAASRLRGGTSSRRLSSTPLPKAKR). Residues 720-737 (SAASRLRGGTSSRRLSST) show a composition bias toward low complexity. Serine 735 is subject to Phosphoserine; by PKA. Phosphoserine occurs at positions 745, 774, 789, and 811. The tract at residues 757–794 (RSHIASPSPCPDRMPLPSPTESRHSLSIPPVSSPPEQK) is disordered. Pro residues predominate over residues 764-774 (SPCPDRMPLPS). Disordered stretches follow at residues 824 to 904 (FESS…LQEV) and 963 to 1012 (KIIQ…DDSW). A coiled-coil region spans residues 867–956 (SVDQKQIEEQ…IKDKSAHSEN (90 aa)). Composition is skewed to basic and acidic residues over residues 871 to 904 (KQIE…LQEV) and 973 to 982 (SADKSSKKMV).

The protein belongs to the OFD1 family. As to quaternary structure, homooligomer. Interacts with LCA5. Interacts with RUVBL1; the interaction is direct and may mediate interaction with the NuA4 histone acetyltransferase complex. Interacts with SDCCAG8; the interaction is direct. Interacts with MAP1LC3B. Interacts with C2CD3; OFD1 may act as a negative regulator of C2CD3. Forms a complex with KIAA0753/OFIP and CEP20/FOR20; the interaction with CEP20 is detected only in the presence of KIAA0753. Interacts with PCM1; this interaction may be mediated by KIAA0753/OFIP. Interacts with TBC1D31; regulates OFD1 activity in cilium assembly. In terms of processing, phosphorylated. Phosphorylation at Ser-735, by the cAMP-dependent protein kinase PKA, triggers ubiquitination and proteasomal degradation of OFD1. Also increases its interaction with TBC1D31 and regulates its function in ciliogenesis. Ubiquitinated by PJA2, upon phosphorylation at Ser-735 by PKA, leads to the proteasomal degradation of OFD1. Widely expressed. Expressed in 9 and 14 weeks old embryos in metanephric mesenchyme, oral mucosa, lung, heart, nasal and cranial cartilage, and brain. Expressed in metanephros, brain, tongue, and limb.

The protein resides in the cytoplasm. Its subcellular location is the cytoskeleton. It is found in the microtubule organizing center. It localises to the centrosome. The protein localises to the centriole. The protein resides in the cilium basal body. Its subcellular location is the nucleus. It is found in the centriolar satellite. Functionally, component of the centrioles controlling mother and daughter centrioles length. Recruits to the centriole IFT88 and centriole distal appendage-specific proteins including CEP164. Involved in the biogenesis of the cilium, a centriole-associated function. The cilium is a cell surface projection found in many vertebrate cells required to transduce signals important for development and tissue homeostasis. Plays an important role in development by regulating Wnt signaling and the specification of the left-right axis. Only OFD1 localized at the centriolar satellites is removed by autophagy, which is an important step in the ciliogenesis regulation. This chain is Centriole and centriolar satellite protein OFD1 (OFD1), found in Homo sapiens (Human).